The following is a 465-amino-acid chain: GTPase Der (465 aa).

EngA-type G domains are found at residues 3 to 166 and 184 to 358; these read FLVA…LNEF and IHFS…ACAN. Residues 9-16, 56-60, 118-121, 190-197, 237-241, and 302-305 each bind GTP; these read GRANVGKS, DTGGI, NKVD, GRPNVGKS, DTAGV, and NKWD. The region spanning 359 to 443 is the KH-like domain; the sequence is KKITTADATR…PIVFEFKQSE (85 aa).

This sequence belongs to the TRAFAC class TrmE-Era-EngA-EngB-Septin-like GTPase superfamily. EngA (Der) GTPase family. Associates with the 50S ribosomal subunit.

In terms of biological role, GTPase that plays an essential role in the late steps of ribosome biogenesis. The sequence is that of GTPase Der from Francisella philomiragia subsp. philomiragia (strain ATCC 25017 / CCUG 19701 / FSC 153 / O#319-036).